The sequence spans 599 residues: Elongation factor 4 (599 aa).

One can recognise a tr-type G domain in the interval 5–187; sequence SHIRNFSIIA…RLVTVIPAPE (183 aa). GTP contacts are provided by residues 17 to 22 and 134 to 137; these read DHGKST and NKMD.

It belongs to the TRAFAC class translation factor GTPase superfamily. Classic translation factor GTPase family. LepA subfamily.

It is found in the cell inner membrane. It carries out the reaction GTP + H2O = GDP + phosphate + H(+). Its function is as follows. Required for accurate and efficient protein synthesis under certain stress conditions. May act as a fidelity factor of the translation reaction, by catalyzing a one-codon backward translocation of tRNAs on improperly translocated ribosomes. Back-translocation proceeds from a post-translocation (POST) complex to a pre-translocation (PRE) complex, thus giving elongation factor G a second chance to translocate the tRNAs correctly. Binds to ribosomes in a GTP-dependent manner. The chain is Elongation factor 4 from Pseudomonas paraeruginosa (strain DSM 24068 / PA7) (Pseudomonas aeruginosa (strain PA7)).